A 243-amino-acid polypeptide reads, in one-letter code: MKAGIIGAMEPEVAILKEKLTDAKSTEHAGYTFHQGQLDGSDVVIVQSGIGKVAAALATAILIDRFQVDYVVNTGSAGGFDASLKVGDIVVSSEVRYHDVDLTAFGYEIGQLPANPAAFMPHDDLVAAAKKGIEQLSQTAGENIKAVTGLITTGDTFMTKEEDVAKARANFPTMAAVEMEGAAIAQACLQLKTPFVVIRSLSDIAGKESPHTFEEYLETAAVNSSQLVLNMLGQLKGKVLSAA.

Glu-12 (proton acceptor) is an active-site residue. Substrate is bound by residues Gly-78, Met-158, and 179 to 180 (ME). Catalysis depends on Asp-203, which acts as the Proton donor.

The protein belongs to the PNP/UDP phosphorylase family. MtnN subfamily.

The enzyme catalyses S-adenosyl-L-homocysteine + H2O = S-(5-deoxy-D-ribos-5-yl)-L-homocysteine + adenine. It catalyses the reaction S-methyl-5'-thioadenosine + H2O = 5-(methylsulfanyl)-D-ribose + adenine. It carries out the reaction 5'-deoxyadenosine + H2O = 5-deoxy-D-ribose + adenine. The protein operates within amino-acid biosynthesis; L-methionine biosynthesis via salvage pathway; S-methyl-5-thio-alpha-D-ribose 1-phosphate from S-methyl-5'-thioadenosine (hydrolase route): step 1/2. Functionally, catalyzes the irreversible cleavage of the glycosidic bond in both 5'-methylthioadenosine (MTA) and S-adenosylhomocysteine (SAH/AdoHcy) to adenine and the corresponding thioribose, 5'-methylthioribose and S-ribosylhomocysteine, respectively. Also cleaves 5'-deoxyadenosine, a toxic by-product of radical S-adenosylmethionine (SAM) enzymes, into 5-deoxyribose and adenine. In Colwellia psychrerythraea (strain 34H / ATCC BAA-681) (Vibrio psychroerythus), this protein is 5'-methylthioadenosine/S-adenosylhomocysteine nucleosidase.